The following is a 115-amino-acid chain: NTF2-related export protein 1 (115 aa).

Residues 7-115 (YAQEFVQRYY…LVLRSSTNFL (109 aa)) form the NTF2 domain.

Its subcellular location is the nucleus. Functionally, stimulator of protein export for NES-containing proteins. Also plays a role in mRNA nuclear export. The chain is NTF2-related export protein 1 (nxt1) from Schizosaccharomyces pombe (strain 972 / ATCC 24843) (Fission yeast).